A 246-amino-acid chain; its full sequence is MNDRIIEFDPLIEGVLINRYKRFLADIELETGEVVTAHCANTGPMKGLLTEGAKVRMSVSPSPKRKLPFTWEQICVLDAKNEEVWVGINTLFANKLIKKVIEKNLLNEIIGEIETIKAEVPYGKDKKSRIDFFLTPKSSNPDKRNIYIEVKNTTWMKGNVALFPDTVTKRGQKHLIELKELIPASKSILILCITRKDACFFSPGDDADPLYGNLFRESFSAGMIPIPCSFEFHKDHITWNGIKPLK.

This sequence belongs to the SfsA family.

The chain is Sugar fermentation stimulation protein homolog from Prochlorococcus marinus (strain MIT 9312).